The chain runs to 217 residues: Ribulose-phosphate 3-epimerase (217 aa).

Ser-6 lines the substrate pocket. Residues His-29, Asp-31, and His-62 each contribute to the a divalent metal cation site. Asp-31 acts as the Proton acceptor in catalysis. Residues His-62, 138–141, 171–173, and 193–194 each bind substrate; these read GFGG, DGG, and GS. Asp-171 contacts a divalent metal cation. The active-site Proton donor is the Asp-171.

It belongs to the ribulose-phosphate 3-epimerase family. Requires a divalent metal cation as cofactor.

The catalysed reaction is D-ribulose 5-phosphate = D-xylulose 5-phosphate. Its pathway is carbohydrate degradation. Its function is as follows. Catalyzes the reversible epimerization of D-ribulose 5-phosphate to D-xylulose 5-phosphate. The polypeptide is Ribulose-phosphate 3-epimerase (Helicobacter pylori (strain J99 / ATCC 700824) (Campylobacter pylori J99)).